Here is a 117-residue protein sequence, read N- to C-terminus: Immunoglobulin kappa variable 1-17 (117 aa).

Positions 1 to 22 are cleaved as a signal peptide; it reads MDMRVPAQLLGLLLLWFPGARC. Residues 23–45 are framework-1; sequence DIQMTQSPSSLSASVGDRVTITC. In terms of domain architecture, Ig-like spans 24-117; sequence IQMTQSPSSL…YYCLQHNSYP (94 aa). Cys-45 and Cys-110 are joined by a disulfide. Residues 46-56 are complementarity-determining-1; that stretch reads RASQGIRNDLG. Positions 57–71 are framework-2; sequence WYQQKPGKAPKRLIY. The complementarity-determining-2 stretch occupies residues 72–78; sequence AASSLQS. Positions 79-110 are framework-3; it reads GVPSRFSGSGSGTEFTLTISSLQPEDFATYYC. Residues 111–117 form a complementarity-determining-3 region; that stretch reads LQHNSYP.

As to quaternary structure, immunoglobulins are composed of two identical heavy chains and two identical light chains; disulfide-linked.

The protein resides in the secreted. Its subcellular location is the cell membrane. Functionally, v region of the variable domain of immunoglobulin light chains that participates in the antigen recognition. Immunoglobulins, also known as antibodies, are membrane-bound or secreted glycoproteins produced by B lymphocytes. In the recognition phase of humoral immunity, the membrane-bound immunoglobulins serve as receptors which, upon binding of a specific antigen, trigger the clonal expansion and differentiation of B lymphocytes into immunoglobulins-secreting plasma cells. Secreted immunoglobulins mediate the effector phase of humoral immunity, which results in the elimination of bound antigens. The antigen binding site is formed by the variable domain of one heavy chain, together with that of its associated light chain. Thus, each immunoglobulin has two antigen binding sites with remarkable affinity for a particular antigen. The variable domains are assembled by a process called V-(D)-J rearrangement and can then be subjected to somatic hypermutations which, after exposure to antigen and selection, allow affinity maturation for a particular antigen. This chain is Immunoglobulin kappa variable 1-17, found in Homo sapiens (Human).